We begin with the raw amino-acid sequence, 299 residues long: MYDILPPELWIKIVDYSGEINLLLTSINFFELFNLVDVKVNVIEYIIENELIDVLKHIVVLKNLKHPIMGKNIISIESLNKCLLDSCNKGQLKIVQHLINIGANIESNNNYAVLLASGGGHLEVVKYLVSQGANIKSKNNRVVGWASQHGRLEVVKYLVSLGADIRSNDDYAVRWASEHGHLEVAKYLVSLGADIRSKYYYILCGASQNGYLEIIKYIVSLGADIRAYNNCAVKWASQCGHIDIVKYLASQGADIRNDNDYCVGLASKNGHIEVVKYLVSQGADIKTYNDHAVKVASKK.

ANK repeat units follow at residues Ser78 to Ser107, Asn108 to Ser137, Asn139 to Ser167, Asn168 to Ser197, Tyr199 to Ala227, Tyr228 to Asn257, and Asp258 to Thr287.

In Acanthamoeba polyphaga mimivirus (APMV), this protein is Putative ankyrin repeat protein R864.